The primary structure comprises 1174 residues: DNA-directed RNA polymerase subunit beta' (1174 aa).

The Zn(2+) site is built by cysteine 60, cysteine 62, cysteine 75, and cysteine 78. 3 residues coordinate Mg(2+): aspartate 450, aspartate 452, and aspartate 454. 4 residues coordinate Zn(2+): cysteine 795, cysteine 869, cysteine 876, and cysteine 879.

It belongs to the RNA polymerase beta' chain family. As to quaternary structure, the RNAP catalytic core consists of 2 alpha, 1 beta, 1 beta' and 1 omega subunit. When a sigma factor is associated with the core the holoenzyme is formed, which can initiate transcription. It depends on Mg(2+) as a cofactor. Zn(2+) is required as a cofactor.

The enzyme catalyses RNA(n) + a ribonucleoside 5'-triphosphate = RNA(n+1) + diphosphate. Functionally, DNA-dependent RNA polymerase catalyzes the transcription of DNA into RNA using the four ribonucleoside triphosphates as substrates. The chain is DNA-directed RNA polymerase subunit beta' from Clostridium kluyveri (strain ATCC 8527 / DSM 555 / NBRC 12016 / NCIMB 10680 / K1).